Here is a 182-residue protein sequence, read N- to C-terminus: Crossover junction endodeoxyribonuclease RuvC (182 aa).

Active-site residues include Asp7, Glu69, and Asp141. Mg(2+) is bound by residues Asp7, Glu69, and Asp141.

Belongs to the RuvC family. Homodimer which binds Holliday junction (HJ) DNA. The HJ becomes 2-fold symmetrical on binding to RuvC with unstacked arms; it has a different conformation from HJ DNA in complex with RuvA. In the full resolvosome a probable DNA-RuvA(4)-RuvB(12)-RuvC(2) complex forms which resolves the HJ. Mg(2+) serves as cofactor.

The protein resides in the cytoplasm. It catalyses the reaction Endonucleolytic cleavage at a junction such as a reciprocal single-stranded crossover between two homologous DNA duplexes (Holliday junction).. The RuvA-RuvB-RuvC complex processes Holliday junction (HJ) DNA during genetic recombination and DNA repair. Endonuclease that resolves HJ intermediates. Cleaves cruciform DNA by making single-stranded nicks across the HJ at symmetrical positions within the homologous arms, yielding a 5'-phosphate and a 3'-hydroxyl group; requires a central core of homology in the junction. The consensus cleavage sequence is 5'-(A/T)TT(C/G)-3'. Cleavage occurs on the 3'-side of the TT dinucleotide at the point of strand exchange. HJ branch migration catalyzed by RuvA-RuvB allows RuvC to scan DNA until it finds its consensus sequence, where it cleaves and resolves the cruciform DNA. This Variovorax paradoxus (strain S110) protein is Crossover junction endodeoxyribonuclease RuvC.